Here is a 206-residue protein sequence, read N- to C-terminus: Small ribosomal subunit protein uS4 (206 aa).

One can recognise an S4 RNA-binding domain in the interval 96 to 161 (RRLDNVVYRM…QGRIQAALAL (66 aa)).

It belongs to the universal ribosomal protein uS4 family. In terms of assembly, part of the 30S ribosomal subunit. Contacts protein S5. The interaction surface between S4 and S5 is involved in control of translational fidelity.

Functionally, one of the primary rRNA binding proteins, it binds directly to 16S rRNA where it nucleates assembly of the body of the 30S subunit. With S5 and S12 plays an important role in translational accuracy. This Legionella pneumophila (strain Paris) protein is Small ribosomal subunit protein uS4.